The sequence spans 298 residues: MTEEFEIAGISTGAWWSSPTNTAAVFSGYSLPCSTEISPDVTNFGWQNFDNKINDHNDGCMNMHNSFFEGLLIDPNDQLLPDPWSKSTIPNAKSELLENFPFLDNMFLVDSEAESLLDHEIRNHKSSKEQITQDYKNLTSKRSEELEENSDEYSPRLLKRPRLETLSPLPSFKVRKEKLGDRITALQQLVSPFGKTDTASVLNEAVEYIKFLQEQVTVLSNPEQNTIGSVQQQQCSNKKSINTQGEVEEDECSPRRYVDLSSRGLCLMPISASYPVAAAAASAAEMNVHLVSGIFHSL.

Residues 117–149 adopt a coiled-coil conformation; the sequence is LDHEIRNHKSSKEQITQDYKNLTSKRSEELEEN. Residues 126–154 form a disordered region; sequence SSKEQITQDYKNLTSKRSEELEENSDEYS. Polar residues predominate over residues 129–140; the sequence is EQITQDYKNLTS. In terms of domain architecture, bHLH spans 163-212; that stretch reads LETLSPLPSFKVRKEKLGDRITALQQLVSPFGKTDTASVLNEAVEYIKFL.

In terms of assembly, homodimer. In terms of tissue distribution, differentiating root endodermis.

The protein localises to the nucleus. This Arabidopsis thaliana (Mouse-ear cress) protein is Transcription factor bHLH114 (BHLH114).